The primary structure comprises 299 residues: Taste receptor type 2 member 45 (299 aa).

Residue M1 is a topological domain, extracellular. Residues 2–22 (ITFLPIIFSILVVVTFVIGNF) traverse the membrane as a helical segment. The Cytoplasmic segment spans residues 23–55 (ANGFIALVNSTEWVKRQKISFADQIVTALAVSR). The helical transmembrane segment at 56–76 (VGLLWVLLLNWYSTVLNPAFC) threads the bilayer. At 77–98 (SVELRTTAYNIWAVTGHFSNWP) the chain is on the extracellular side. The chain crosses the membrane as a helical span at residues 99-119 (ATSLSIFYLLKIANFSNLIFL). At 120–126 (RLKRRVK) the chain is on the cytoplasmic side. Residues 127-147 (SVILVVLLGPLLFLACHLFVV) form a helical membrane-spanning segment. Residues 148–178 (NMNQIVWTKEYEGNMTWKIKLRRAMYLSDTT) lie on the Extracellular side of the membrane. An N-linked (GlcNAc...) asparagine glycan is attached at N161. The chain crosses the membrane as a helical span at residues 179–199 (VTMLANLVPFTVTLISFLLLV). Topologically, residues 200–229 (CSLCKHLKKMQLHGKGSQDPSTKVHIKVLQ) are cytoplasmic. The helical transmembrane segment at 230 to 250 (TVISFFLLRAIYFVSVIISVW) threads the bilayer. The Extracellular portion of the chain corresponds to 251-259 (SFKNLENKP). Residues 260–280 (VFMFCQAIGFSCSSAHPFILI) form a helical membrane-spanning segment. Residues 281 to 299 (WGNKKLKQTYLSVLWQMRY) are Cytoplasmic-facing.

Belongs to the G-protein coupled receptor T2R family. In terms of tissue distribution, expressed in subsets of taste receptor cells of the tongue and exclusively in gustducin-positive cells.

The protein resides in the membrane. Its function is as follows. Receptor that may play a role in the perception of bitterness and is gustducin-linked. May play a role in sensing the chemical composition of the gastrointestinal content. The activity of this receptor may stimulate alpha gustducin, mediate PLC-beta-2 activation and lead to the gating of TRPM5. The protein is Taste receptor type 2 member 45 (TAS2R45) of Homo sapiens (Human).